We begin with the raw amino-acid sequence, 548 residues long: Membrane protein insertase YidC (548 aa).

A helical membrane pass occupies residues 6 to 26; it reads NLLVIALLFVSFMIWQAWEQD. Residues 28–56 form a disordered region; sequence NPQPQTQQTTQTTTTAAGSAADQGVPASG. Positions 29–42 are enriched in low complexity; the sequence is PQPQTQQTTQTTTT. 4 consecutive transmembrane segments (helical) span residues 350 to 370, 424 to 444, 458 to 478, and 499 to 519; these read FVGN…GIMY, FPLI…MGSI, LSAQ…MFFI, and PVIF…YYIV.

The protein belongs to the OXA1/ALB3/YidC family. Type 1 subfamily. In terms of assembly, interacts with the Sec translocase complex via SecD. Specifically interacts with transmembrane segments of nascent integral membrane proteins during membrane integration.

The protein localises to the cell inner membrane. Required for the insertion and/or proper folding and/or complex formation of integral membrane proteins into the membrane. Involved in integration of membrane proteins that insert both dependently and independently of the Sec translocase complex, as well as at least some lipoproteins. Aids folding of multispanning membrane proteins. In Salmonella choleraesuis (strain SC-B67), this protein is Membrane protein insertase YidC.